A 42-amino-acid polypeptide reads, in one-letter code: Photosystem I reaction center subunit IX (42 aa).

A helical membrane pass occupies residues Tyr-8–Ile-28.

This sequence belongs to the PsaJ family.

The protein localises to the plastid. The protein resides in the chloroplast thylakoid membrane. Its function is as follows. May help in the organization of the PsaE and PsaF subunits. The protein is Photosystem I reaction center subunit IX of Rhodomonas salina (Cryptomonas salina).